The following is a 242-amino-acid chain: Anamorsin homolog (242 aa).

The segment at 1 to 140 (MMNFADTLVI…NVTAENPDFL (140 aa)) is N-terminal SAM-like domain. Positions 140–159 (LSNEDDNDEHSSDGEAHENA) are disordered. The segment at 141–162 (SNEDDNDEHSSDGEAHENAEDN) is linker. Basic and acidic residues predominate over residues 148 to 159 (EHSSDGEAHENA). Positions 205, 208, 216, and 219 each coordinate [4Fe-4S] cluster. 2 short sequence motifs (cx2C motif) span residues 205 to 208 (CGNC) and 216 to 219 (CASC). The interval 205–219 (CGNCYLGDAFRCASC) is fe-S binding site B.

The protein belongs to the anamorsin family. Monomer. [4Fe-4S] cluster serves as cofactor.

The protein resides in the cytoplasm. It is found in the mitochondrion intermembrane space. In terms of biological role, component of the cytosolic iron-sulfur (Fe-S) protein assembly (CIA) machinery. Required for the maturation of extramitochondrial Fe-S proteins. Part of an electron transfer chain functioning in an early step of cytosolic Fe-S biogenesis, facilitating the de novo assembly of a [4Fe-4S] cluster on the cytosolic Fe-S scaffold complex. Electrons are transferred from NADPH via a FAD- and FMN-containing diflavin oxidoreductase. Together with the diflavin oxidoreductase, also required for the assembly of the diferric tyrosyl radical cofactor of ribonucleotide reductase (RNR), probably by providing electrons for reduction during radical cofactor maturation in the catalytic small subunit. The sequence is that of Anamorsin homolog from Plasmodium vivax (strain Salvador I).